A 74-amino-acid polypeptide reads, in one-letter code: Homeobox protein Hox-B8 (74 aa).

A compositionally biased stretch (low complexity) spans 1 to 24; it reads YTDCKLAASGLGEEAESSEQSPSP. Residues 1-28 are disordered; that stretch reads YTDCKLAASGLGEEAESSEQSPSPTQLF. The Antp-type hexapeptide motif lies at 27 to 32; sequence LFPWMR. Residues 39-74 constitute a DNA-binding region (homeobox); the sequence is RRRGRQTYSRYQTLELEKEFLFNPYLTRKRRIEVSR.

It belongs to the Antp homeobox family.

The protein resides in the nucleus. Sequence-specific transcription factor which is part of a developmental regulatory system that provides cells with specific positional identities on the anterior-posterior axis. The polypeptide is Homeobox protein Hox-B8 (HOXB8) (Gallus gallus (Chicken)).